The primary structure comprises 37 residues: Large ribosomal subunit protein bL36 (37 aa).

Belongs to the bacterial ribosomal protein bL36 family.

The polypeptide is Large ribosomal subunit protein bL36 (Laribacter hongkongensis (strain HLHK9)).